The chain runs to 251 residues: 4-hydroxy-tetrahydrodipicolinate reductase (251 aa).

8–13 (GALGRM) contacts NAD(+). Residue arginine 36 participates in NADP(+) binding. Residues 89-91 (GTT) and 113-116 (TTNF) contribute to the NAD(+) site. Histidine 145 serves as the catalytic Proton donor/acceptor. Histidine 146 is a binding site for (S)-2,3,4,5-tetrahydrodipicolinate. Lysine 149 acts as the Proton donor in catalysis. Position 155–156 (155–156 (GT)) interacts with (S)-2,3,4,5-tetrahydrodipicolinate.

This sequence belongs to the DapB family.

The protein resides in the cytoplasm. It catalyses the reaction (S)-2,3,4,5-tetrahydrodipicolinate + NAD(+) + H2O = (2S,4S)-4-hydroxy-2,3,4,5-tetrahydrodipicolinate + NADH + H(+). The enzyme catalyses (S)-2,3,4,5-tetrahydrodipicolinate + NADP(+) + H2O = (2S,4S)-4-hydroxy-2,3,4,5-tetrahydrodipicolinate + NADPH + H(+). It participates in amino-acid biosynthesis; L-lysine biosynthesis via DAP pathway; (S)-tetrahydrodipicolinate from L-aspartate: step 4/4. Its function is as follows. Catalyzes the conversion of 4-hydroxy-tetrahydrodipicolinate (HTPA) to tetrahydrodipicolinate. The sequence is that of 4-hydroxy-tetrahydrodipicolinate reductase from Methanocorpusculum labreanum (strain ATCC 43576 / DSM 4855 / Z).